A 614-amino-acid chain; its full sequence is Asparagine synthetase [glutamine-hydrolyzing] 3 (614 aa).

Residue C2 is the For GATase activity of the active site. The region spanning 2–216 (CGITGWVDFK…PAHALTFSKD (215 aa)) is the Glutamine amidotransferase type-2 domain. L-glutamine is bound by residues 50–54 (RLAVV), 77–79 (NGE), and D102. 377–378 (SG) contacts ATP.

The protein belongs to the asparagine synthetase family.

It catalyses the reaction L-aspartate + L-glutamine + ATP + H2O = L-asparagine + L-glutamate + AMP + diphosphate + H(+). Its pathway is amino-acid biosynthesis; L-asparagine biosynthesis; L-asparagine from L-aspartate (L-Gln route): step 1/1. Asparagine synthetase involved in sporulation. This chain is Asparagine synthetase [glutamine-hydrolyzing] 3 (asnO), found in Bacillus subtilis (strain 168).